The chain runs to 270 residues: Chlorophyll a-b binding protein 7, chloroplastic (270 aa).

The transit peptide at 1–42 (MASACASSTIAAVAFSSPSSRRNGSIVGTTKASFLGGRRLRV) directs the protein to the chloroplast. W68 provides a ligand contact to chlorophyll b. Residues F88, E107, and H110 each coordinate chlorophyll a. R112 contributes to the chlorophyll b binding site. A helical membrane pass occupies residues 113 to 133 (WAMLGAAGIFIPELLTKIGIL). Position 144 (Q144) interacts with chlorophyll a. The chain crosses the membrane as a helical span at residues 146–166 (YFTDTTTLFIVELVLIGWAEG). The chlorophyll b site is built by I155, E165, and R168. Chlorophyll a is bound by residues K221, E222, N225, R227, Q239, and H254. A helical membrane pass occupies residues 228–248 (LAMLAVMGAWFQHIYTGTGPI).

This sequence belongs to the light-harvesting chlorophyll a/b-binding (LHC) protein family. As to quaternary structure, the LHC complex consists of chlorophyll a-b binding proteins. It depends on Binds at least 14 chlorophylls (8 Chl-a and 6 Chl-b) and carotenoids such as lutein and neoxanthin. as a cofactor. Post-translationally, photoregulated by reversible phosphorylation of its threonine residues.

Its subcellular location is the plastid. It is found in the chloroplast thylakoid membrane. In terms of biological role, the light-harvesting complex (LHC) functions as a light receptor, it captures and delivers excitation energy to photosystems with which it is closely associated. The sequence is that of Chlorophyll a-b binding protein 7, chloroplastic (CAB7) from Solanum lycopersicum (Tomato).